Consider the following 184-residue polypeptide: Photosystem I assembly protein Ycf4 (184 aa).

Transmembrane regions (helical) follow at residues 22 to 42 and 64 to 84; these read FCWACILLLGSLGFLLVGISS and IVMSFYGIAGLFISSYLWSTI.

This sequence belongs to the Ycf4 family.

Its subcellular location is the plastid. The protein resides in the chloroplast thylakoid membrane. Functionally, seems to be required for the assembly of the photosystem I complex. This chain is Photosystem I assembly protein Ycf4, found in Piper cenocladum (Ant piper).